The primary structure comprises 408 residues: Argininosuccinate synthase (408 aa).

An ATP-binding site is contributed by 8 to 16; the sequence is AYSGGLDTS. Tyrosine 86 lines the L-citrulline pocket. Glycine 116 is a binding site for ATP. 3 residues coordinate L-aspartate: threonine 118, asparagine 122, and aspartate 123. Asparagine 122 lines the L-citrulline pocket. L-citrulline-binding residues include arginine 126, serine 174, glutamate 259, and tyrosine 271.

Belongs to the argininosuccinate synthase family. Type 1 subfamily. As to quaternary structure, homotetramer.

It is found in the cytoplasm. The catalysed reaction is L-citrulline + L-aspartate + ATP = 2-(N(omega)-L-arginino)succinate + AMP + diphosphate + H(+). Its pathway is amino-acid biosynthesis; L-arginine biosynthesis; L-arginine from L-ornithine and carbamoyl phosphate: step 2/3. The sequence is that of Argininosuccinate synthase from Leuconostoc mesenteroides subsp. mesenteroides (strain ATCC 8293 / DSM 20343 / BCRC 11652 / CCM 1803 / JCM 6124 / NCDO 523 / NBRC 100496 / NCIMB 8023 / NCTC 12954 / NRRL B-1118 / 37Y).